A 371-amino-acid polypeptide reads, in one-letter code: Chaperone protein DnaJ (371 aa).

The region spanning 5 to 69 (EFYDRLGVSK…QKRAAYDQYG (65 aa)) is the J domain. The CR-type zinc finger occupies 127-209 (GAEKEVSYNR…CHGTGHEKKT (83 aa)). Zn(2+) is bound by residues cysteine 140, cysteine 143, cysteine 157, cysteine 160, cysteine 183, cysteine 186, cysteine 197, and cysteine 200. CXXCXGXG motif repeat units lie at residues 140–147 (CHTCSGSG), 157–164 (CQKCHGSG), 183–190 (CDVCQGSG), and 197–204 (CPTCHGTG).

The protein belongs to the DnaJ family. In terms of assembly, homodimer. The cofactor is Zn(2+).

The protein localises to the cytoplasm. Its function is as follows. Participates actively in the response to hyperosmotic and heat shock by preventing the aggregation of stress-denatured proteins and by disaggregating proteins, also in an autonomous, DnaK-independent fashion. Unfolded proteins bind initially to DnaJ; upon interaction with the DnaJ-bound protein, DnaK hydrolyzes its bound ATP, resulting in the formation of a stable complex. GrpE releases ADP from DnaK; ATP binding to DnaK triggers the release of the substrate protein, thus completing the reaction cycle. Several rounds of ATP-dependent interactions between DnaJ, DnaK and GrpE are required for fully efficient folding. Also involved, together with DnaK and GrpE, in the DNA replication of plasmids through activation of initiation proteins. The protein is Chaperone protein DnaJ of Streptococcus agalactiae serotype Ia (strain ATCC 27591 / A909 / CDC SS700).